A 431-amino-acid polypeptide reads, in one-letter code: Histidinol dehydrogenase (431 aa).

3 residues coordinate NAD(+): Y131, Q193, and N216. The substrate site is built by S239, Q261, and H264. Zn(2+)-binding residues include Q261 and H264. Residues E329 and H330 each act as proton acceptor in the active site. Substrate is bound by residues H330, D363, E417, and H422. A Zn(2+)-binding site is contributed by D363. H422 is a Zn(2+) binding site.

It belongs to the histidinol dehydrogenase family. The cofactor is Zn(2+).

The enzyme catalyses L-histidinol + 2 NAD(+) + H2O = L-histidine + 2 NADH + 3 H(+). It participates in amino-acid biosynthesis; L-histidine biosynthesis; L-histidine from 5-phospho-alpha-D-ribose 1-diphosphate: step 9/9. Functionally, catalyzes the sequential NAD-dependent oxidations of L-histidinol to L-histidinaldehyde and then to L-histidine. This Clostridium acetobutylicum (strain ATCC 824 / DSM 792 / JCM 1419 / IAM 19013 / LMG 5710 / NBRC 13948 / NRRL B-527 / VKM B-1787 / 2291 / W) protein is Histidinol dehydrogenase.